The chain runs to 1761 residues: MQFQLTLFLHLGWLSYSKAQDDCNRGACHPTTGDLLVGRNTQLMASSTCGLSRAQKYCILSYLEGEQKCFICDSRFPYDPYDQPNSHTIENVIVSFEPDREKKWWQSENGLDHVSIRLDLEALFRFSHLILTFKTFRPAAMLVERSTDYGHNWKVFKYFAKDCATSFPNITSGQAQGVGDIVCDSKYSDIEPSTGGEVVLKVLDPSFEIENPYSPYIQDLVTLTNLRINFTKLHTLGDALLGRRQNDSLDKYYYALYEMIVRGSCFCNGHASECRPMQKMRGDVFSPPGMVHGQCVCQHNTDGPNCERCKDFFQDAPWRPAADLQDNACRSCSCNSHSSRCHFDMTTYLASGGLSGGVCEDCQHNTEGQHCDRCRPLFYRDPLKTISDPYACIPCECDPDGTISGGICVSHSDPALGSVAGQCLCKENVEGAKCDQCKPNHYGLSATDPLGCQPCDCNPLGSLPFLTCDVDTGQCLCLSYVTGAHCEECTVGYWGLGNHLHGCSPCDCDIGGAYSNVCSPKNGQCECRPHVTGRSCSEPAPGYFFAPLNFYLYEAEEATTLQGLAPLGSETFGQSPAVHVVLGEPVPGNPVTWTGPGFARVLPGAGLRFAVNNIPFPVDFTIAIHYETQSAADWTVQIVVNPPGGSEHCIPKTLQSKPQSFALPAATRIMLLPTPICLEPDVQYSIDVYFSQPLQGESHAHSHVLVDSLGLIPQINSLENFCSKQDLDEYQLHNCVEIASAMGPQVLPGACERLIISMSAKLHDGAVACKCHPQGSVGSSCSRLGGQCQCKPLVVGRCCDRCSTGSYDLGHHGCHPCHCHPQGSKDTVCDQVTGQCPCHGEVSGRRCDRCLAGYFGFPSCHPCPCNRFAELCDPETGSCFNCGGFTTGRNCERCIDGYYGNPSSGQPCRPCLCPDDPSSNQYFAHSCYQNLWSSDVICNCLQGYTGTQCGECSTGFYGNPRISGAPCQPCACNNNIDVTDPESCSRVTGECLRCLHNTQGANCQLCKPGHYGSALNQTCRRCSCHASGVSPMECPPGGGACLCDPVTGACPCLPNVTGLACDRCADGYWNLVPGRGCQSCDCDPRTSQSSHCDQLTGQCPCKLGYGGKRCSECQENYYGDPPGRCIPCDCNRAGTQKPICDPDTGMCRCREGVSGQRCDRCARGHSQEFPTCLQCHLCFDQWDHTISSLSKAVQGLMRLAANMEDKRETLPVCEADFKDLRGNVSEIERILKHPVFPSGKFLKVKDYHDSVRRQIMQLNEQLKAVYEFQDLKDTIERAKNEADLLLEDLQEEIDLQSSVLNASIADSSENIKKYYHISSSAEKKINETSSTINTSANTRNDLLTILDTLTSKGNLSLERLKQIKIPDIQILNEKVCGDPGNVPCVPLPCGGALCTGRKGHRKCRGPGCHGSLTLSTNALQKAQEAKSIIRNLDKQVRGLKNQIESISEQAEVSKNNALQLREKLGNIRNQSDSEEENINLFIKKVKNFLLEENVPPEDIEKVANGVLDIHLPIPSQNLTDELVKIQKHMQLCEDYRTDENRLNEEADGAQKLLVKAKAAEKAANILLNLDKTLNQLQQAQITQGRANSTITQLTANITKIKKNVLQAENQTREMKSELELAKQRSGLEDGLSLLQTKLQRHQDHAVNAKVQAESAQHQAGSLEKEFVELKKQYAILQRKTSTTGLTKETLGKVKQLKDAAEKLAGDTEAKIRRITDLERKIQDLNLSRQAKADQLRILEDQVVAIKNEIVEQEKKYARCYS.

The first 19 residues, 1 to 19 (MQFQLTLFLHLGWLSYSKA), serve as a signal peptide directing secretion. One can recognise a Laminin N-terminal domain in the interval 24–264 (NRGACHPTTG…ALYEMIVRGS (241 aa)). N-linked (GlcNAc...) asparagine glycans are attached at residues N169, N229, and N246. 19 disulfides stabilise this stretch: C265/C274, C267/C295, C297/C306, C309/C329, C332/C341, C334/C359, C362/C371, C374/C392, C395/C408, C397/C423, C425/C434, C437/C452, C455/C468, C457/C475, C477/C486, C489/C503, C506/C518, C508/C525, and C527/C536. Laminin EGF-like domains are found at residues 265–331 (CFCN…ACRS), 332–394 (CSCN…ACIP), 395–454 (CECD…GCQP), and 455–505 (CDCN…GCSP). Residues 506–552 (CDCDIGGAYSNVCSPKNGQCECRPHVTGRSCSEPAPGYFFAPLNFYL) form the Laminin EGF-like 5; truncated domain. Residues 545–763 (FAPLNFYLYE…LIISMSAKLH (219 aa)) form the Laminin IV type B domain. Disulfide bonds link C769/C781, C771/C788, C790/C799, C802/C814, C817/C829, C819/C836, C838/C847, C850/C860, C863/C872, C865/C879, C882/C891, C894/C908, C913/C938, C940/C949, C952/C967, C970/C984, C972/C991, C994/C1003, C1006/C1019, C1022/C1043, C1024/C1050, C1052/C1061, C1064/C1077, C1080/C1092, C1082/C1099, C1101/C1110, C1113/C1125, C1128/C1140, C1130/C1147, C1149/C1158, and C1161/C1172. Laminin EGF-like domains follow at residues 769-816 (CKCH…GCHP), 817-862 (CHCH…SCHP), 863-910 (CPCN…PCRP), 911-969 (CLCP…PCQP), 970-1021 (CACN…TCRR), 1022-1079 (CSCH…GCQS), 1080-1127 (CDCD…RCIP), and 1128-1174 (CDCN…TCLQ). N1016 carries N-linked (GlcNAc...) asparagine glycosylation. N-linked (GlcNAc...) asparagine glycosylation is present at N1055. The segment at 1175-1375 (CHLCFDQWDH…PDIQILNEKV (201 aa)) is domain II. N1223, N1301, N1326, N1333, and N1354 each carry an N-linked (GlcNAc...) asparagine glycan. The stretch at 1243-1301 (KVKDYHDSVRRQIMQLNEQLKAVYEFQDLKDTIERAKNEADLLLEDLQEEIDLQSSVLN) forms a coiled coil. The segment at 1376-1408 (CGDPGNVPCVPLPCGGALCTGRKGHRKCRGPGC) is domain alpha. The tract at residues 1409-1761 (HGSLTLSTNA…QEKKYARCYS (353 aa)) is domain I. Residues 1416 to 1480 (TNALQKAQEA…SDSEEENINL (65 aa)) adopt a coiled-coil conformation. Residues N1469, N1517, N1587, N1596, N1609, and N1725 are each glycosylated (N-linked (GlcNAc...) asparagine). Residues 1525 to 1759 (IQKHMQLCED…VEQEKKYARC (235 aa)) adopt a coiled-coil conformation.

In terms of assembly, laminin is a complex glycoprotein, consisting of three different polypeptide chains (alpha, beta, gamma), which are bound to each other by disulfide bonds into a cross-shaped molecule comprising one long and three short arms with globules at each end.

The protein localises to the secreted. Its subcellular location is the extracellular space. It is found in the extracellular matrix. It localises to the basement membrane. Its function is as follows. Binding to cells via a high affinity receptor, laminin is thought to mediate the attachment, migration and organization of cells into tissues during embryonic development by interacting with other extracellular matrix components. The sequence is that of Laminin subunit beta-4 (LAMB4) from Homo sapiens (Human).